Here is a 204-residue protein sequence, read N- to C-terminus: Oxidoreductase iacF (204 aa).

The protein belongs to the oxidoreductase OpS7 family.

It participates in secondary metabolite biosynthesis. Functionally, oxidoreductase; part of the gene cluster that mediates the biosynthesis of iso-A82775C, a enylepoxycyclohexane and biosynthetic precursor of the chloropestolide anticancer natural products. Within the cluster, the prenyltransferase iacE prenylates siccayne to generate pestalodiol E, using dimethylallyl diphosphate (DMAPP) as cosubstrate. The probable oxidoreductase iacF is then involved in the epoxidation of pestalodiol F to pestalodiol F, which is further converted to pestalofone A by the short-chain dehydrogenase/reductase iacG. Iso-A82775C is subsequently generated from pestalofone A by the short-chain dehydrogenase/reductase iacC. Iso-A82775C is further condensed with maldoxin via a Diels-Alder reaction to produce the anticancer natural products chloropestolides A to E. In Pestalotiopsis fici (strain W106-1 / CGMCC3.15140), this protein is Oxidoreductase iacF.